The sequence spans 149 residues: Transcriptional repressor NrdR (149 aa).

A zinc finger lies at 3–34; that stretch reads CPFCSAVDTKVIDSRLVGEGSSVRRRRQCLVC. The ATP-cone domain maps to 49–139; that stretch reads PRVVKSNDVR…VYRSFEDIKE (91 aa).

This sequence belongs to the NrdR family. Requires Zn(2+) as cofactor.

In terms of biological role, negatively regulates transcription of bacterial ribonucleotide reductase nrd genes and operons by binding to NrdR-boxes. The sequence is that of Transcriptional repressor NrdR from Enterobacter sp. (strain 638).